A 351-amino-acid chain; its full sequence is Selenide, water dikinase (351 aa).

C20 is an active-site residue. ATP-binding positions include K23 and 51–53 (TKD). D54 serves as a coordination point for Mg(2+). ATP contacts are provided by residues D71, D94, and 142–144 (GHS). D94 is a binding site for Mg(2+). A Mg(2+)-binding site is contributed by D230.

Belongs to the selenophosphate synthase 1 family. Class I subfamily. In terms of assembly, homodimer. It depends on Mg(2+) as a cofactor.

It carries out the reaction hydrogenselenide + ATP + H2O = selenophosphate + AMP + phosphate + 2 H(+). In terms of biological role, synthesizes selenophosphate from selenide and ATP. This Pasteurella multocida (strain Pm70) protein is Selenide, water dikinase.